A 77-amino-acid chain; its full sequence is UPF0291 protein RBAM_017680 (77 aa).

A disordered region spans residues 55 to 77; the sequence is IDPEGNDVTPEKLKREQQKNNLH. Over residues 63-77 the composition is skewed to basic and acidic residues; the sequence is TPEKLKREQQKNNLH.

This sequence belongs to the UPF0291 family.

It localises to the cytoplasm. In Bacillus velezensis (strain DSM 23117 / BGSC 10A6 / LMG 26770 / FZB42) (Bacillus amyloliquefaciens subsp. plantarum), this protein is UPF0291 protein RBAM_017680.